Here is a 454-residue protein sequence, read N- to C-terminus: tRNA-2-methylthio-N(6)-dimethylallyladenosine synthase (454 aa).

One can recognise an MTTase N-terminal domain in the interval 6–122; it reads RHYHITTFGC…LKDLLESVFD (117 aa). [4Fe-4S] cluster contacts are provided by Cys15, Cys51, Cys85, Cys157, Cys161, and Cys164. The region spanning 143–381 is the Radical SAM core domain; the sequence is RDSKVTAWVN…HLGNLKVAER (239 aa). The TRAM domain occupies 383–447; that stretch reads QRYFGRIEEV…PFSLTGQPVE (65 aa).

The protein belongs to the methylthiotransferase family. MiaB subfamily. Monomer. [4Fe-4S] cluster serves as cofactor.

The protein resides in the cytoplasm. The catalysed reaction is N(6)-dimethylallyladenosine(37) in tRNA + (sulfur carrier)-SH + AH2 + 2 S-adenosyl-L-methionine = 2-methylsulfanyl-N(6)-dimethylallyladenosine(37) in tRNA + (sulfur carrier)-H + 5'-deoxyadenosine + L-methionine + A + S-adenosyl-L-homocysteine + 2 H(+). Its function is as follows. Catalyzes the methylthiolation of N6-(dimethylallyl)adenosine (i(6)A), leading to the formation of 2-methylthio-N6-(dimethylallyl)adenosine (ms(2)i(6)A) at position 37 in tRNAs that read codons beginning with uridine. The sequence is that of tRNA-2-methylthio-N(6)-dimethylallyladenosine synthase from Nostoc punctiforme (strain ATCC 29133 / PCC 73102).